The following is a 372-amino-acid chain: Protein-glutamate methylesterase/protein-glutamine glutaminase (372 aa).

The Response regulatory domain occupies 5 to 123; the sequence is RVLIVDDSAL…SANLTTVSET (119 aa). D56 bears the 4-aspartylphosphate mark. Residues 140 to 151 show a composition bias toward polar residues; it reads GTRSTDTTNSFS. The interval 140–177 is disordered; it reads GTRSTDTTNSFSEPFKSTIPKPMTAAEPQKEEKPTPQR. Positions 167–177 are enriched in basic and acidic residues; the sequence is PQKEEKPTPQR. In terms of domain architecture, CheB-type methylesterase spans 178–364; that stretch reads EHGNIQIIAI…VSLDNMAAAI (187 aa). Active-site residues include S190, H217, and D313.

It belongs to the CheB family. Post-translationally, phosphorylated by CheA. Phosphorylation of the N-terminal regulatory domain activates the methylesterase activity.

Its subcellular location is the cytoplasm. The catalysed reaction is [protein]-L-glutamate 5-O-methyl ester + H2O = L-glutamyl-[protein] + methanol + H(+). It catalyses the reaction L-glutaminyl-[protein] + H2O = L-glutamyl-[protein] + NH4(+). Functionally, involved in chemotaxis. Part of a chemotaxis signal transduction system that modulates chemotaxis in response to various stimuli. Catalyzes the demethylation of specific methylglutamate residues introduced into the chemoreceptors (methyl-accepting chemotaxis proteins or MCP) by CheR. Also mediates the irreversible deamidation of specific glutamine residues to glutamic acid. This chain is Protein-glutamate methylesterase/protein-glutamine glutaminase, found in Treponema denticola (strain ATCC 35405 / DSM 14222 / CIP 103919 / JCM 8153 / KCTC 15104).